We begin with the raw amino-acid sequence, 289 residues long: Glycine-rich RNA-binding protein 5, mitochondrial (289 aa).

A mitochondrion-targeting transit peptide spans 1–31 (MAFLSKVGRLFSQTSSHVTASSSMLQSIRCM). Residues 34 to 111 (SKIFVGGISY…RRIRVNYATE (78 aa)) enclose the RRM domain. Residues 219 to 289 (QGSSTNAGFD…TDDGDVAKRA (71 aa)) form a disordered region. Residues 257–272 (GSDNQFGDAENGNTEN) show a composition bias toward polar residues.

This sequence belongs to the GR-RBP family. In terms of assembly, homodimer. Interacts with MORF8/RIP1 AND RBG3/ORRM3. Binds to RBG2/ORRM5.

Its subcellular location is the mitochondrion. In terms of biological role, possibly has a role in RNA transcription or processing during stress. Binds RNAs and DNAs sequence with a preference to single-stranded nucleic acids. Displays strong affinity to poly(U) sequence. Involved in C-to-U editing of mitochondrial RNA. Functions as a major mitochondrial editing factor. Controls 44 percent of the mitochondrial editing sites. The sequence is that of Glycine-rich RNA-binding protein 5, mitochondrial from Arabidopsis thaliana (Mouse-ear cress).